Here is a 381-residue protein sequence, read N- to C-terminus: Peptidoglycan transport system permease protein YejE (381 aa).

Helical transmembrane passes span 38–58, 183–203, 230–250, 292–312, and 347–367; these read YWSF…EFIA, VLFG…AGAI, ILLI…GIML, LLPN…SGSI, and WLGL…IFVG. The 193-residue stretch at 179 to 371 folds into the ABC transmembrane type-1 domain; the sequence is FRISVLFGLT…LLIFVGEAVR (193 aa).

This sequence belongs to the binding-protein-dependent transport system permease family. As to quaternary structure, the complex is composed of one ATP-binding protein (YejF), two transmembrane proteins (YejB and YejE) and a solute-binding protein (YepA or YejA).

It is found in the cell inner membrane. Part of the ABC transporter complex YejBEF-YepA involved in the uptake of muropeptides, the breakdown products of cell wall peptidoglycan. The import of muropeptides into the cell enables peptidoglycan recycling, which is vital for cell wall integrity in this bacterium. Is also probably part of the ABC transporter complex YejABEF, which is likely involved in broad-spectrum peptide import. Responsible for the translocation of the substrate across the membrane. The chain is Peptidoglycan transport system permease protein YejE from Agrobacterium fabrum (strain C58 / ATCC 33970) (Agrobacterium tumefaciens (strain C58)).